The primary structure comprises 330 residues: Putative 1-aminocyclopropane-1-carboxylate deaminase (330 aa).

K54 carries the post-translational modification N6-(pyridoxal phosphate)lysine.

The protein belongs to the ACC deaminase/D-cysteine desulfhydrase family. The cofactor is pyridoxal 5'-phosphate.

The enzyme catalyses 1-aminocyclopropane-1-carboxylate + H2O = 2-oxobutanoate + NH4(+). The sequence is that of Putative 1-aminocyclopropane-1-carboxylate deaminase from Pyrococcus abyssi (strain GE5 / Orsay).